We begin with the raw amino-acid sequence, 1400 residues long: Tensin-2 (1400 aa).

The Phorbol-ester/DAG-type zinc finger occupies 31–79 (PHSFREKVFRKKTPVCAVCKVTIDGTGVSCRVCKVATHRKCEAKVTSSC). Residue T91 is modified to Phosphothreonine. Phosphoserine is present on residues S118 and S120. The region spanning 122-294 (DPLMERRWDL…SYFSGLLSGS (173 aa)) is the Phosphatase tensin-type domain. The active-site Phosphocysteine intermediate is C231. The region spanning 299 to 425 (SSPLFLHYVF…ASVEFVFSSS (127 aa)) is the C2 tensin-type domain. The interval 425–444 (SPEKVKGNTPRNDPSVSVDY) is disordered. Polar residues predominate over residues 433–444 (TPRNDPSVSVDY). Phosphoserine is present on S455. At Y456 the chain carries Phosphotyrosine. S466 is modified (phosphoserine). The residue at position 474 (T474) is a Phosphothreonine. Residue S481 is modified to Phosphoserine. At Y483 the chain carries Phosphotyrosine. The disordered stretch occupies residues 488 to 536 (RVPRQTPPAPSPELPPPPMLSVSSDSGHSSTLTTEHTAESPGRPPPTAA). Residues 492-506 (QTPPAPSPELPPPPM) show a composition bias toward pro residues. R555 carries the post-translational modification Omega-N-methylarginine. The interval 809–1114 (CGSPSEGRGY…DVTQPPEHPL (306 aa)) is disordered. 5 positions are modified to phosphoserine: S820, S825, S830, S832, and S835. Polar residues-rich tracts occupy residues 898-917 (CSAS…SSPV) and 929-940 (TRSPSLAPTQRL). T909 is modified (phosphothreonine). Phosphoserine occurs at positions 931, 941, and 972. T977 is subject to Phosphothreonine. Residues S991 and S1003 each carry the phosphoserine modification. Residues 1046 to 1056 (PEPPQSSPTPA) show a composition bias toward pro residues. Residues 1082–1098 (SGQQPSPPARSTNQHVT) are compositionally biased toward polar residues. A Phosphoserine modification is found at S1087. The SH2 domain maps to 1131–1238 (WYKPHLSRDQ…SLPCCLRIPS (108 aa)). T1173 is subject to Phosphothreonine. Residue S1238 is modified to Phosphoserine. The PTB domain maps to 1266–1399 (ACSVLYLTSV…FITKVLLGQR (134 aa)).

Belongs to the PTEN phosphatase protein family. Interacts with AXL. Interacts with SYK; leading to its phosphorylation. Interacts with SQSTM1 (via PB1 domain); the interaction leads to sequestration of TNS2 in cytoplasmic aggregates with SQSTM1 and promotes TNS2 ubiquitination and proteasomal degradation. Post-translationally, ubiquitinated following sequestration in cytoplasmic aggregates with SQSTM1, leading to proteasomal degradation. In terms of tissue distribution, in the adult kidney, expressed mainly in glomeruli (at protein level). In the newborn kidney, localizes on the basal surface of podocytes along the glomerular basement membrane and not in endothelial cells. Low expression levels in anabolic skeletal muscles.

Its subcellular location is the cell junction. The protein localises to the focal adhesion. It is found in the cell membrane. It localises to the cytoplasm. The catalysed reaction is O-phospho-L-tyrosyl-[protein] + H2O = L-tyrosyl-[protein] + phosphate. Tyrosine-protein phosphatase which regulates cell motility, proliferation and muscle-response to insulin. Phosphatase activity is mediated by binding to phosphatidylinositol-3,4,5-triphosphate (PtdIns(3,4,5)P3) via the SH2 domain. In muscles and under catabolic conditions, dephosphorylates IRS1 leading to its degradation and muscle atrophy. Negatively regulates PI3K-AKT pathway activation. Dephosphorylates nephrin NPHS1 in podocytes which affects mTORC1 complex activity. Under normal glucose conditions, NPHS1 outcompetes IRS1 for binding to phosphatidylinositol 3-kinase (PI3K) which balances mTORC1 activity but high glucose conditions lead to up-regulation of TNS2, increased NPHS1 dephosphorylation and activation of mTORC1, contributing to podocyte hypertrophy and proteinuria. Required for correct podocyte morphology, podocyte-glomerular basement membrane interaction and integrity of the glomerular filtration barrier. Enhances RHOA activation in the presence of DLC1. Plays a role in promoting DLC1-dependent remodeling of the extracellular matrix. In Mus musculus (Mouse), this protein is Tensin-2 (Tns2).